Here is a 25-residue protein sequence, read N- to C-terminus: Neuromedin-U-25 (25 aa).

Residue Asn-25 is modified to Asparagine amide.

It belongs to the NmU family.

It is found in the secreted. Functionally, stimulates uterine smooth muscle contraction and causes selective vasoconstriction. The polypeptide is Neuromedin-U-25 (NMU) (Gallus gallus (Chicken)).